Here is a 361-residue protein sequence, read N- to C-terminus: Myricetin 3-O-methyltransferase 3 (361 aa).

Asp-229 serves as a coordination point for S-adenosyl-L-methionine. Catalysis depends on His-267, which acts as the Proton acceptor.

This sequence belongs to the class I-like SAM-binding methyltransferase superfamily. Cation-independent O-methyltransferase family. Homodimer. In terms of tissue distribution, mainly expressed in leaves secreting glandular trichomes types 1 and 4 and, to a lesser extent, in storage trichomes type 6.

The enzyme catalyses kaempferol + S-adenosyl-L-methionine = 3-O-methylkaempferol + S-adenosyl-L-homocysteine + H(+). It carries out the reaction quercetin + S-adenosyl-L-methionine = 3',4',5,7-tetrahydroxy-3-methoxyflavone + S-adenosyl-L-homocysteine + H(+). The catalysed reaction is myricetin + S-adenosyl-L-methionine = 3-O-methylmyricetin + S-adenosyl-L-homocysteine + H(+). It catalyses the reaction kaempferide + S-adenosyl-L-methionine = 3,4'-O-dimethylkaempferol + S-adenosyl-L-homocysteine + H(+). The enzyme catalyses isorhamnetin + S-adenosyl-L-methionine = 3,3'-O-dimethylquercetin + S-adenosyl-L-homocysteine + H(+). It carries out the reaction rhamnetin + S-adenosyl-L-methionine = 3',4',5-trihydroxy-3,7-dimethoxyflavone + S-adenosyl-L-homocysteine + H(+). The catalysed reaction is laricitrin + S-adenosyl-L-methionine = 3,3'-O-dimethylmyricetin + S-adenosyl-L-homocysteine + H(+). It catalyses the reaction syringetin + S-adenosyl-L-methionine = 3,3',5'-O-trimethylmyricetin + S-adenosyl-L-homocysteine + H(+). Its pathway is flavonoid metabolism. Functionally, flavonoid 3-O-methyltransferase involved in the biosynthesis of polymethoxylated flavonoids natural products such as myricetin derivatives, aroma compounds possessing antioxidant properties and exhibiting pharmacological activities such as anti-carcinogen, anti-viral, anti-thrombotic, anti-diabetic, anti-atherosclerotic, and anti-inflammatory effects. Catalyzes S-adenosylmethionine-dependent regioselective 3-O-methylation of flavonoids; active on various hydroxylated flavonoid substrates. Active with myricetin, quercetin, kaempferol, 4'-methyl kaempferol (kaempferide), 3'-methyl quercetin (isorhamnetin), 7-methyl quercetin (rhamnetin), 3'-methyl myricetin (laricitrin) and 3',5'-dimethyl myricetin (syringetin), thus producing 3-methyl myricetin, 3-methyl quercetin, 3-methyl kaempferol, 4',3-methyl kaempferol, 3',3-methyl quercetin, 7,3-dimethyl quercetin, 3',3-dimethyl myricetin and 3',5',3-dimethyl myricetin, respectively. Inactive with flavonol substrates methylated at the 3-hydroxyl position such as 3-O-methyl quercetin. The chain is Myricetin 3-O-methyltransferase 3 from Solanum habrochaites (Wild tomato).